Here is a 415-residue protein sequence, read N- to C-terminus: Peptide chain release factor subunit 1 (415 aa).

Belongs to the eukaryotic release factor 1 family. Heterodimer of two subunits, one of which binds GTP.

The protein resides in the cytoplasm. In terms of biological role, directs the termination of nascent peptide synthesis (translation) in response to the termination codons UAA, UAG and UGA. This is Peptide chain release factor subunit 1 from Thermococcus kodakarensis (strain ATCC BAA-918 / JCM 12380 / KOD1) (Pyrococcus kodakaraensis (strain KOD1)).